Reading from the N-terminus, the 200-residue chain is Glutathione S-transferase 1-1 (200 aa).

The GST N-terminal domain occupies 1 to 73; the sequence is GSSPCRSVIM…YLVEKYGKTD (73 aa). Residues serine 2, 43–45, and 57–59 each bind glutathione; these read HTI and ESR. In terms of domain architecture, GST C-terminal spans 79–200; it reads CPKKRAVINQ…AGCLEFKKFF (122 aa).

It belongs to the GST superfamily. Theta family. As to quaternary structure, homodimer.

The enzyme catalyses RX + glutathione = an S-substituted glutathione + a halide anion + H(+). It carries out the reaction 1,1,1-trichloro-2,2-bis(4-chlorophenyl)ethane = 1,1-dichloro-2,2-bis(4-chlorophenyl)ethylene + chloride + H(+). Its function is as follows. Conjugation of reduced glutathione to a wide number of exogenous and endogenous hydrophobic electrophiles. Has DDT dehydrochlorinase activity. The sequence is that of Glutathione S-transferase 1-1 (GstD1) from Drosophila mauritiana (Fruit fly).